A 163-amino-acid chain; its full sequence is NADH-quinone oxidoreductase subunit I (163 aa).

2 4Fe-4S ferredoxin-type domains span residues 55 to 84 (RRYP…IDAE) and 94 to 123 (TRYD…EGPN). [4Fe-4S] cluster is bound by residues cysteine 64, cysteine 67, cysteine 70, cysteine 74, cysteine 103, cysteine 106, cysteine 109, and cysteine 113.

The protein belongs to the complex I 23 kDa subunit family. In terms of assembly, NDH-1 is composed of 14 different subunits. Subunits NuoA, H, J, K, L, M, N constitute the membrane sector of the complex. Requires [4Fe-4S] cluster as cofactor.

Its subcellular location is the cell inner membrane. It catalyses the reaction a quinone + NADH + 5 H(+)(in) = a quinol + NAD(+) + 4 H(+)(out). In terms of biological role, NDH-1 shuttles electrons from NADH, via FMN and iron-sulfur (Fe-S) centers, to quinones in the respiratory chain. The immediate electron acceptor for the enzyme in this species is believed to be ubiquinone. Couples the redox reaction to proton translocation (for every two electrons transferred, four hydrogen ions are translocated across the cytoplasmic membrane), and thus conserves the redox energy in a proton gradient. In Rhodobacter capsulatus (Rhodopseudomonas capsulata), this protein is NADH-quinone oxidoreductase subunit I (nuoI).